Consider the following 582-residue polypeptide: ATP-dependent lipid A-core flippase (582 aa).

6 helical membrane-spanning segments follow: residues 23–43, 61–81, 140–160, 163–183, 247–267, and 273–293; these read AAFI…TLFL, ILLY…SLNV, AVLV…LMFY, WQLS…VGVV, AIST…VLVI, and MLGE…IMLL. The ABC transmembrane type-1 domain maps to 26 to 308; it reads IAAILCMIGY…LTNVNSDFQR (283 aa). Positions 340 to 576 constitute an ABC transporter domain; sequence IVFDDVTFSY…EGAYFQLHNL (237 aa). 374–381 is an ATP binding site; sequence GRSGSGKS.

Belongs to the ABC transporter superfamily. Lipid exporter (TC 3.A.1.106) family. As to quaternary structure, homodimer.

It localises to the cell inner membrane. The catalysed reaction is ATP + H2O + lipid A-core oligosaccharideSide 1 = ADP + phosphate + lipid A-core oligosaccharideSide 2.. In terms of biological role, involved in lipopolysaccharide (LPS) biosynthesis. Translocates lipid A-core from the inner to the outer leaflet of the inner membrane. Transmembrane domains (TMD) form a pore in the inner membrane and the ATP-binding domain (NBD) is responsible for energy generation. This is ATP-dependent lipid A-core flippase from Idiomarina loihiensis (strain ATCC BAA-735 / DSM 15497 / L2-TR).